We begin with the raw amino-acid sequence, 362 residues long: Putative glutamate--cysteine ligase 2-1 (362 aa).

Belongs to the glutamate--cysteine ligase type 2 family. YbdK subfamily.

It catalyses the reaction L-cysteine + L-glutamate + ATP = gamma-L-glutamyl-L-cysteine + ADP + phosphate + H(+). Functionally, ATP-dependent carboxylate-amine ligase which exhibits weak glutamate--cysteine ligase activity. This chain is Putative glutamate--cysteine ligase 2-1, found in Streptomyces avermitilis (strain ATCC 31267 / DSM 46492 / JCM 5070 / NBRC 14893 / NCIMB 12804 / NRRL 8165 / MA-4680).